The following is a 436-amino-acid chain: Trigger factor (436 aa).

Residues 163–248 (GDTVNIDFDG…VNEIKYKDVP (86 aa)) form the PPIase FKBP-type domain.

The protein belongs to the FKBP-type PPIase family. Tig subfamily.

Its subcellular location is the cytoplasm. The catalysed reaction is [protein]-peptidylproline (omega=180) = [protein]-peptidylproline (omega=0). In terms of biological role, involved in protein export. Acts as a chaperone by maintaining the newly synthesized protein in an open conformation. Functions as a peptidyl-prolyl cis-trans isomerase. This chain is Trigger factor, found in Staphylococcus saprophyticus subsp. saprophyticus (strain ATCC 15305 / DSM 20229 / NCIMB 8711 / NCTC 7292 / S-41).